Here is a 520-residue protein sequence, read N- to C-terminus: Ribonuclease Y (520 aa).

Residues 4 to 24 traverse the membrane as a helical segment; sequence TVWILISILLATVGAVVGFFV. The region spanning 210 to 273 is the KH domain; that stretch reads TVSVVNLPND…ETARIALDKL (64 aa). The region spanning 336–429 is the HD domain; sequence VLKHSMEVAY…VAAADALSAA (94 aa).

Belongs to the RNase Y family.

Its subcellular location is the cell membrane. Endoribonuclease that initiates mRNA decay. This Bacillus cereus (strain ZK / E33L) protein is Ribonuclease Y.